Here is a 1183-residue protein sequence, read N- to C-terminus: DNA-directed RNA polymerase subunit beta (1183 aa).

Positions 1155–1183 (ADVDEDDVNEHKVNIQQSSIPESQKETTD) are disordered.

The protein belongs to the RNA polymerase beta chain family. In terms of assembly, the RNAP catalytic core consists of 2 alpha, 1 beta, 1 beta' and 1 omega subunit. When a sigma factor is associated with the core the holoenzyme is formed, which can initiate transcription.

It catalyses the reaction RNA(n) + a ribonucleoside 5'-triphosphate = RNA(n+1) + diphosphate. Its function is as follows. DNA-dependent RNA polymerase catalyzes the transcription of DNA into RNA using the four ribonucleoside triphosphates as substrates. The polypeptide is DNA-directed RNA polymerase subunit beta (Staphylococcus carnosus (strain TM300)).